The sequence spans 359 residues: Cyclin puc1 (359 aa).

It belongs to the cyclin family.

Its function is as follows. Function in exit from the mitotic cycle. Contributes to negative regulation of the timing of sexual development in fission yeast, and functions at the transition between cycling and non-cycling cells. Interacts with protein kinase A. This is Cyclin puc1 (puc1) from Schizosaccharomyces pombe (strain 972 / ATCC 24843) (Fission yeast).